Here is a 209-residue protein sequence, read N- to C-terminus: Small ribosomal subunit protein uS4 (209 aa).

The S4 RNA-binding domain maps to 99–161 (CRLDNIAFRL…SSKLVVVEMG (63 aa)).

Belongs to the universal ribosomal protein uS4 family. Part of the 30S ribosomal subunit. Contacts protein S5. The interaction surface between S4 and S5 is involved in control of translational fidelity.

Its function is as follows. One of the primary rRNA binding proteins, it binds directly to 16S rRNA where it nucleates assembly of the body of the 30S subunit. Functionally, with S5 and S12 plays an important role in translational accuracy. The chain is Small ribosomal subunit protein uS4 from Acidobacterium capsulatum (strain ATCC 51196 / DSM 11244 / BCRC 80197 / JCM 7670 / NBRC 15755 / NCIMB 13165 / 161).